We begin with the raw amino-acid sequence, 213 residues long: N-(5'-phosphoribosyl)anthranilate isomerase (213 aa).

This sequence belongs to the TrpF family.

The catalysed reaction is N-(5-phospho-beta-D-ribosyl)anthranilate = 1-(2-carboxyphenylamino)-1-deoxy-D-ribulose 5-phosphate. The protein operates within amino-acid biosynthesis; L-tryptophan biosynthesis; L-tryptophan from chorismate: step 3/5. The protein is N-(5'-phosphoribosyl)anthranilate isomerase of Methylibium petroleiphilum (strain ATCC BAA-1232 / LMG 22953 / PM1).